A 277-amino-acid chain; its full sequence is NADPH-dependent 7-cyano-7-deazaguanine reductase (277 aa).

83 to 85 (IES) contributes to the substrate binding site. 85 to 86 (SK) is a binding site for NADPH. The Thioimide intermediate role is filled by cysteine 184. Aspartate 191 serves as the catalytic Proton donor. 223–224 (HE) is a binding site for substrate. 252–253 (RG) is an NADPH binding site.

It belongs to the GTP cyclohydrolase I family. QueF type 2 subfamily. In terms of assembly, homodimer.

It is found in the cytoplasm. It catalyses the reaction 7-aminomethyl-7-carbaguanine + 2 NADP(+) = 7-cyano-7-deazaguanine + 2 NADPH + 3 H(+). It functions in the pathway tRNA modification; tRNA-queuosine biosynthesis. In terms of biological role, catalyzes the NADPH-dependent reduction of 7-cyano-7-deazaguanine (preQ0) to 7-aminomethyl-7-deazaguanine (preQ1). In Cupriavidus necator (strain ATCC 17699 / DSM 428 / KCTC 22496 / NCIMB 10442 / H16 / Stanier 337) (Ralstonia eutropha), this protein is NADPH-dependent 7-cyano-7-deazaguanine reductase.